Consider the following 159-residue polypeptide: Transcriptional repressor NrdR (159 aa).

A zinc finger spans residues C3–C34. The ATP-cone domain occupies P49–D139.

Belongs to the NrdR family. Zn(2+) serves as cofactor.

In terms of biological role, negatively regulates transcription of bacterial ribonucleotide reductase nrd genes and operons by binding to NrdR-boxes. This chain is Transcriptional repressor NrdR, found in Nitrosospira multiformis (strain ATCC 25196 / NCIMB 11849 / C 71).